The chain runs to 472 residues: Methanethiol oxidase (472 aa).

This sequence belongs to the selenium-binding protein family.

It is found in the nucleus. Its subcellular location is the cytoplasm. The protein resides in the cytosol. The protein localises to the membrane. It catalyses the reaction methanethiol + O2 + H2O = hydrogen sulfide + formaldehyde + H2O2 + H(+). The protein operates within organosulfur degradation. Functionally, catalyzes the oxidation of methanethiol, an organosulfur compound known to be produced in substantial amounts by gut bacteria. Selenium-binding protein which may be involved in the sensing of reactive xenobiotics in the cytoplasm. May be involved in intra-Golgi protein transport. This Xenopus tropicalis (Western clawed frog) protein is Methanethiol oxidase (selenbp1).